The chain runs to 113 residues: U11-theraphotoxin-Hhn1a (113 aa).

The signal sequence occupies residues 1 to 21 (MNTVRVTFLLVFVLAVSLGRA). Positions 22–74 (DKDENRMEMQEKTEQGKSYLDFAENLLLQKLEELEAKLLEEDSEESRNSRQKR) are excised as a propeptide. Intrachain disulfides connect Cys-75–Cys-90, Cys-82–Cys-95, and Cys-89–Cys-110.

This sequence belongs to the neurotoxin 14 (magi-1) family. 01 (HNTX-16) subfamily. As to expression, expressed by the venom gland.

It is found in the secreted. In terms of biological role, probable ion channel inhibitor. This is U11-theraphotoxin-Hhn1a from Cyriopagopus hainanus (Chinese bird spider).